Reading from the N-terminus, the 267-residue chain is Ribosomal RNA small subunit methyltransferase A (267 aa).

S-adenosyl-L-methionine-binding residues include N13, L15, G39, E59, D87, and N106.

It belongs to the class I-like SAM-binding methyltransferase superfamily. rRNA adenine N(6)-methyltransferase family. RsmA subfamily.

The protein resides in the cytoplasm. The enzyme catalyses adenosine(1518)/adenosine(1519) in 16S rRNA + 4 S-adenosyl-L-methionine = N(6)-dimethyladenosine(1518)/N(6)-dimethyladenosine(1519) in 16S rRNA + 4 S-adenosyl-L-homocysteine + 4 H(+). Its function is as follows. Specifically dimethylates two adjacent adenosines (A1518 and A1519) in the loop of a conserved hairpin near the 3'-end of 16S rRNA in the 30S particle. May play a critical role in biogenesis of 30S subunits. This chain is Ribosomal RNA small subunit methyltransferase A, found in Sulfurimonas denitrificans (strain ATCC 33889 / DSM 1251) (Thiomicrospira denitrificans (strain ATCC 33889 / DSM 1251)).